A 608-amino-acid chain; its full sequence is Glutamine--fructose-6-phosphate aminotransferase [isomerizing] (608 aa).

Cysteine 2 acts as the Nucleophile; for GATase activity in catalysis. The 216-residue stretch at 2 to 217 (CGIVGIVGNQ…DGDWAVIGKT (216 aa)) folds into the Glutamine amidotransferase type-2 domain. 2 consecutive SIS domains span residues 281–422 (ISDA…ARGT) and 456–598 (LSRE…VDQP). The For Fru-6P isomerization activity role is filled by lysine 603.

Homodimer.

It localises to the cytoplasm. It catalyses the reaction D-fructose 6-phosphate + L-glutamine = D-glucosamine 6-phosphate + L-glutamate. Catalyzes the first step in hexosamine metabolism, converting fructose-6P into glucosamine-6P using glutamine as a nitrogen source. The chain is Glutamine--fructose-6-phosphate aminotransferase [isomerizing] from Rhizobium meliloti (strain 1021) (Ensifer meliloti).